The chain runs to 464 residues: Secretion-regulating guanine nucleotide exchange factor (464 aa).

RCC1 repeat units follow at residues 15 to 67, 68 to 119, 120 to 171, 172 to 230, 231 to 283, 284 to 351, and 352 to 402; these read AVLF…VTDG, GDLF…LTEK, GQVL…TTAT, GSVF…LTDT, GELY…KTET, GKVF…VIRD, and KCCS…LAVC. Residues 422–464 are disordered; sequence DDTENTESQGAVDRDRLEGETISDLNPDRTRNGGGGCESETVQ. A Phosphoserine modification is found at Ser429.

Interacts with SEC5. The interaction occurs only in the presence of magnesium or manganese and is stimulated by dCTP or GTP.

Its subcellular location is the cytoplasm. It localises to the nucleus. In terms of biological role, probable guanine nucleotide exchange factor (GEF), which may be involved in the secretion process. The protein is Secretion-regulating guanine nucleotide exchange factor (Sergef) of Mus musculus (Mouse).